The following is a 48-amino-acid chain: Large ribosomal subunit protein bL32 (48 aa).

The segment at L24–Y48 is disordered.

The protein belongs to the bacterial ribosomal protein bL32 family.

This Campylobacter lari (strain RM2100 / D67 / ATCC BAA-1060) protein is Large ribosomal subunit protein bL32.